Reading from the N-terminus, the 280-residue chain is 4-diphosphocytidyl-2-C-methyl-D-erythritol kinase (280 aa).

Lysine 8 is a catalytic residue. 91–101 is a binding site for ATP; the sequence is PVAAGLAGGSS. Residue aspartate 133 is part of the active site.

This sequence belongs to the GHMP kinase family. IspE subfamily.

It carries out the reaction 4-CDP-2-C-methyl-D-erythritol + ATP = 4-CDP-2-C-methyl-D-erythritol 2-phosphate + ADP + H(+). It participates in isoprenoid biosynthesis; isopentenyl diphosphate biosynthesis via DXP pathway; isopentenyl diphosphate from 1-deoxy-D-xylulose 5-phosphate: step 3/6. Functionally, catalyzes the phosphorylation of the position 2 hydroxy group of 4-diphosphocytidyl-2C-methyl-D-erythritol. The protein is 4-diphosphocytidyl-2-C-methyl-D-erythritol kinase of Clostridium kluyveri (strain NBRC 12016).